The chain runs to 600 residues: Proline--tRNA ligase (600 aa).

Belongs to the class-II aminoacyl-tRNA synthetase family. ProS type 1 subfamily. Homodimer.

The protein resides in the cytoplasm. It carries out the reaction tRNA(Pro) + L-proline + ATP = L-prolyl-tRNA(Pro) + AMP + diphosphate. In terms of biological role, catalyzes the attachment of proline to tRNA(Pro) in a two-step reaction: proline is first activated by ATP to form Pro-AMP and then transferred to the acceptor end of tRNA(Pro). As ProRS can inadvertently accommodate and process non-cognate amino acids such as alanine and cysteine, to avoid such errors it has two additional distinct editing activities against alanine. One activity is designated as 'pretransfer' editing and involves the tRNA(Pro)-independent hydrolysis of activated Ala-AMP. The other activity is designated 'posttransfer' editing and involves deacylation of mischarged Ala-tRNA(Pro). The misacylated Cys-tRNA(Pro) is not edited by ProRS. The polypeptide is Proline--tRNA ligase (Prochlorococcus marinus (strain MIT 9312)).